Consider the following 302-residue polypeptide: Sulfate adenylyltransferase subunit 2 (302 aa).

Belongs to the PAPS reductase family. CysD subfamily. As to quaternary structure, heterodimer composed of CysD, the smaller subunit, and CysN.

The enzyme catalyses sulfate + ATP + H(+) = adenosine 5'-phosphosulfate + diphosphate. It participates in sulfur metabolism; hydrogen sulfide biosynthesis; sulfite from sulfate: step 1/3. Its function is as follows. With CysN forms the ATP sulfurylase (ATPS) that catalyzes the adenylation of sulfate producing adenosine 5'-phosphosulfate (APS) and diphosphate, the first enzymatic step in sulfur assimilation pathway. APS synthesis involves the formation of a high-energy phosphoric-sulfuric acid anhydride bond driven by GTP hydrolysis by CysN coupled to ATP hydrolysis by CysD. This is Sulfate adenylyltransferase subunit 2 from Escherichia coli O81 (strain ED1a).